The primary structure comprises 372 residues: tRNA-specific 2-thiouridylase MnmA (372 aa).

ATP contacts are provided by residues 11–18 (GMSGGVDS) and methionine 37. Residues 97–99 (NPD) are interaction with target base in tRNA. Residue cysteine 102 is the Nucleophile of the active site. Residues cysteine 102 and cysteine 199 are joined by a disulfide bond. Position 126 (glycine 126) interacts with ATP. Positions 149 to 151 (KDQ) are interaction with tRNA. The Cysteine persulfide intermediate role is filled by cysteine 199. The tract at residues 309-310 (RY) is interaction with tRNA.

It belongs to the MnmA/TRMU family.

The protein resides in the cytoplasm. The enzyme catalyses S-sulfanyl-L-cysteinyl-[protein] + uridine(34) in tRNA + AH2 + ATP = 2-thiouridine(34) in tRNA + L-cysteinyl-[protein] + A + AMP + diphosphate + H(+). In terms of biological role, catalyzes the 2-thiolation of uridine at the wobble position (U34) of tRNA, leading to the formation of s(2)U34. The sequence is that of tRNA-specific 2-thiouridylase MnmA from Staphylococcus aureus (strain Mu50 / ATCC 700699).